Here is a 484-residue protein sequence, read N- to C-terminus: CUGBP Elav-like family member 2 (484 aa).

Necessary for nuclear export stretches follow at residues 1 to 89 (MNGA…PGMH) and 90 to 178 (HPIQ…EGCS). 3 consecutive RRM domains span residues 16-99 (IKTF…PADS), 108-188 (RKLF…FADT), and 399-477 (ANLF…LKRS). Positions 188 to 240 (TQKDKEQRRLQQQLAQQMQQLNTATWGNLTGLGGLTPQYLALLQQATSSSNLG) are necessary for splicing activity. The interval 347–399 (GLTNGTAGTMDALTQAYSGIQQYAAAALPTLYSQSLLQQQSAAGSQKEGPEGA) is necessary for nuclear localization. The necessary for nuclear localization and splicing activity stretch occupies residues 426 to 484 (ISAKVFIDKQTNLSKCFGFVSYDNPVSAQAAIQAMNGFQIGMKRLKVQLKRSKNDSKPY).

This sequence belongs to the CELF/BRUNOL family. In terms of tissue distribution, expressed in heart.

The protein localises to the nucleus. It is found in the cytoplasm. RNA-binding protein implicated in the regulation of several post-transcriptional events. May be involved in mRNA translation repression and stability. Mediates exon inclusion in TNNT2 pre-mRNA. The polypeptide is CUGBP Elav-like family member 2 (CELF2) (Gallus gallus (Chicken)).